The following is a 145-amino-acid chain: Large ribosomal subunit protein uL15 (145 aa).

Residues M1–R13 show a composition bias toward basic and acidic residues. The segment at M1–Y56 is disordered. The segment covering K14 to G26 has biased composition (basic residues).

It belongs to the universal ribosomal protein uL15 family. In terms of assembly, part of the 50S ribosomal subunit.

Its function is as follows. Binds to the 23S rRNA. The chain is Large ribosomal subunit protein uL15 from Mycoplasma mobile (strain ATCC 43663 / 163K / NCTC 11711) (Mesomycoplasma mobile).